A 203-amino-acid chain; its full sequence is Small ribosomal subunit protein eS1 (203 aa).

It belongs to the eukaryotic ribosomal protein eS1 family.

The chain is Small ribosomal subunit protein eS1 from Methanosarcina acetivorans (strain ATCC 35395 / DSM 2834 / JCM 12185 / C2A).